Consider the following 125-residue polypeptide: NADH-ubiquinone oxidoreductase chain 1 (125 aa).

The next 3 membrane-spanning stretches (helical) occupy residues 5-25, 74-94, and 105-125; these read IFAF…VAFL, YLFF…WNFM, and LSLL…LGSG.

Belongs to the complex I subunit 1 family.

It is found in the mitochondrion inner membrane. It catalyses the reaction a ubiquinone + NADH + 5 H(+)(in) = a ubiquinol + NAD(+) + 4 H(+)(out). Its function is as follows. Core subunit of the mitochondrial membrane respiratory chain NADH dehydrogenase (Complex I) that is believed to belong to the minimal assembly required for catalysis. Complex I functions in the transfer of electrons from NADH to the respiratory chain. The immediate electron acceptor for the enzyme is believed to be ubiquinone. The polypeptide is NADH-ubiquinone oxidoreductase chain 1 (ND1) (Arbacia lixula (Black urchin)).